Here is a 297-residue protein sequence, read N- to C-terminus: Probable oxidoreductase (297 aa).

An NAD(+)-binding site is contributed by 9–33 (VVTGGASGLGAETVRALAAAGAEVT). A substrate-binding site is contributed by Ser-138. The active-site Proton acceptor is Tyr-164.

This sequence belongs to the short-chain dehydrogenases/reductases (SDR) family.

The polypeptide is Probable oxidoreductase (Streptomyces lividans).